The sequence spans 920 residues: Chitin synthase C (920 aa).

Disordered stretches follow at residues 1 to 41 and 140 to 173; these read MSYN…NAYQ and IPML…SPAP. A compositionally biased stretch (acidic residues) spans 154–163; sequence YSDEYQVEEQ. Helical transmembrane passes span 466–486, 564–584, 608–628, 640–660, and 675–695; these read SAFG…FVAL, RWLN…YQIW, LFAW…TTYL, VLGV…FVLA, and MVYF…FVTV. An N-linked (GlcNAc...) asparagine glycan is attached at N715. Transmembrane regions (helical) follow at residues 718–738, 749–769, 847–867, and 892–912; these read FFTI…ASII, FIQY…YAFC, AVVL…LSAA, and VVLW…LWYL.

This sequence belongs to the chitin synthase family. Class I subfamily.

Its subcellular location is the cell membrane. The catalysed reaction is [(1-&gt;4)-N-acetyl-beta-D-glucosaminyl](n) + UDP-N-acetyl-alpha-D-glucosamine = [(1-&gt;4)-N-acetyl-beta-D-glucosaminyl](n+1) + UDP + H(+). Polymerizes chitin, a structural polymer of the cell wall and septum, by transferring the sugar moiety of UDP-GlcNAc to the non-reducing end of the growing chitin polymer. Involved in hyphal growth. This chain is Chitin synthase C, found in Aspergillus oryzae (strain ATCC 42149 / RIB 40) (Yellow koji mold).